The following is a 159-amino-acid chain: RNA pyrophosphohydrolase (159 aa).

Residues 6 to 149 form the Nudix hydrolase domain; sequence GFRPNVGIIL…KREVYRRALK (144 aa). The short motif at 38–59 is the Nudix box element; that stretch reads GGINPDETPEDALYRELNEEVG.

It belongs to the Nudix hydrolase family. RppH subfamily. A divalent metal cation serves as cofactor.

Functionally, accelerates the degradation of transcripts by removing pyrophosphate from the 5'-end of triphosphorylated RNA, leading to a more labile monophosphorylated state that can stimulate subsequent ribonuclease cleavage. This Pseudomonas entomophila (strain L48) protein is RNA pyrophosphohydrolase.